The chain runs to 218 residues: Ras-related protein Rab-11B (218 aa).

Position 2 is an N-acetylglycine (Gly-2). Arg-4 is modified (citrulline). Positions 20, 21, 23, 24, 25, 26, 37, 38, 40, 42, and 43 each coordinate GTP. Ser-25 lines the Mg(2+) pocket. The Switch 1 signature appears at 36–47 (FNLESKSTIGVE). Residues Thr-43 and Asp-66 each coordinate Mg(2+). A Switch 2 motif is present at residues 67-86 (TAGQERYRAITSAYYRGAVG). Residues Gly-69, Asn-124, Lys-125, Asp-127, Ala-155, and Leu-156 each coordinate GTP. The segment at 184 to 218 (RAAHDESPGNNVVDISVPPTTDGQKPNKLQCCQNL) is disordered. S-geranylgeranyl cysteine attachment occurs at residues Cys-214 and Cys-215. Residue Cys-215 is modified to Cysteine methyl ester. The propeptide at 216–218 (QNL) is removed in mature form.

Belongs to the small GTPase superfamily. Rab family. Interacts with KCNMA1. Interacts with RAB11FIP1, RAB11FIP2, RAB11FIP3 and RAB11FIP4. May interact with TBC1D14. Interacts with ATP6V1E1. Interacts with PI4KB. Interacts (GDP-bound form) with ZFYVE27. Interacts (GDP-bound form) with KIF5A in a ZFYVE27-dependent manner. Interacts with RELCH. Interacts (in GTP-bound form) with TBC1D8B (via domain Rab-GAP TBC). Forms a complex containing RAB11B, ASAP1, Rabin8/RAB3IP, RAP11FIP3 and ARF4. Interacts with WDR44. The cofactor is Mg(2+). Post-translationally, citrullinated by PADI4. In terms of processing, (Microbial infection) Glycosylated on arginine residues by S.typhimurium protein Ssek3.

It localises to the recycling endosome membrane. The protein localises to the cytoplasmic vesicle. Its subcellular location is the secretory vesicle. It is found in the synaptic vesicle membrane. The protein resides in the phagosome membrane. The enzyme catalyses GTP + H2O = GDP + phosphate + H(+). With respect to regulation, regulated by guanine nucleotide exchange factors (GEFs) which promote the exchange of bound GDP for free GTP. Regulated by GTPase activating proteins (GAPs) which increase the GTP hydrolysis activity. Inhibited by GDP dissociation inhibitors (GDIs) which prevent Rab-GDP dissociation. Its function is as follows. The small GTPases Rab are key regulators of intracellular membrane trafficking, from the formation of transport vesicles to their fusion with membranes. Rabs cycle between an inactive GDP-bound form and an active GTP-bound form that is able to recruit to membranes different set of downstream effectors directly responsible for vesicle formation, movement, tethering and fusion. The small Rab GTPase RAB11B plays a role in endocytic recycling, regulating apical recycling of several transmembrane proteins including cystic fibrosis transmembrane conductance regulator/CFTR, epithelial sodium channel/ENaC, potassium voltage-gated channel, and voltage-dependent L-type calcium channel. May also regulate constitutive and regulated secretion, like insulin granule exocytosis. Required for melanosome transport and release from melanocytes. Also regulates V-ATPase intracellular transport in response to extracellular acidosis. Promotes Rabin8/RAB3IP preciliary vesicular trafficking to mother centriole by forming a ciliary targeting complex containing Rab11, ASAP1, Rabin8/RAB3IP, RAB11FIP3 and ARF4, thereby regulating ciliogenesis initiation. On the contrary, upon LPAR1 receptor signaling pathway activation, interaction with phosphorylated WDR44 prevents Rab11-RAB3IP-RAB11FIP3 complex formation and cilia growth. The chain is Ras-related protein Rab-11B from Homo sapiens (Human).